The following is a 428-amino-acid chain: Pregnancy-specific beta-1-glycoprotein 3 (428 aa).

The N-terminal stretch at 1 to 34 is a signal peptide; that stretch reads MGPLSAPPCTQRITWKGLLLTALLLNFWNLPTTA. The region spanning 35–144 is the Ig-like V-type domain; that stretch reads QVTIEAEPTK…TGHFTFTLYL (110 aa). 2 N-linked (GlcNAc...) asparagine glycosylation sites follow: Asn104 and Asn111. Residues 127 to 129 carry the Cell attachment site motif; that stretch reads RGD. Ig-like C2-type domains follow at residues 147–234, 240–327, and 335–410; these read PKPS…VTLN, PKPY…VTLN, and PRIY…KSMT. 3 cysteine pairs are disulfide-bonded: Cys169/Cys217, Cys262/Cys310, and Cys354/Cys394. Residues Asn268 and Asn303 are each glycosylated (N-linked (GlcNAc...) asparagine).

The protein belongs to the immunoglobulin superfamily. CEA family.

It localises to the secreted. This is Pregnancy-specific beta-1-glycoprotein 3 (PSG3) from Homo sapiens (Human).